Here is a 240-residue protein sequence, read N- to C-terminus: 4-hydroxy-tetrahydrodipicolinate reductase (240 aa).

Residues 79 to 81 (ATT) and 103 to 106 (SANM) contribute to the NAD(+) site. H135 (proton donor/acceptor) is an active-site residue. A (S)-2,3,4,5-tetrahydrodipicolinate-binding site is contributed by H136. K139 functions as the Proton donor in the catalytic mechanism. 145-146 (GT) serves as a coordination point for (S)-2,3,4,5-tetrahydrodipicolinate.

This sequence belongs to the DapB family.

It localises to the cytoplasm. The catalysed reaction is (S)-2,3,4,5-tetrahydrodipicolinate + NAD(+) + H2O = (2S,4S)-4-hydroxy-2,3,4,5-tetrahydrodipicolinate + NADH + H(+). It carries out the reaction (S)-2,3,4,5-tetrahydrodipicolinate + NADP(+) + H2O = (2S,4S)-4-hydroxy-2,3,4,5-tetrahydrodipicolinate + NADPH + H(+). It functions in the pathway amino-acid biosynthesis; L-lysine biosynthesis via DAP pathway; (S)-tetrahydrodipicolinate from L-aspartate: step 4/4. In terms of biological role, catalyzes the conversion of 4-hydroxy-tetrahydrodipicolinate (HTPA) to tetrahydrodipicolinate. In Staphylococcus aureus (strain MRSA252), this protein is 4-hydroxy-tetrahydrodipicolinate reductase.